The following is an 89-amino-acid chain: Pyrin domain-containing protein 1 (89 aa).

The region spanning 1 to 89 (MGTKREAILK…EEAARLQRAA (89 aa)) is the Pyrin domain.

In terms of assembly, interacts with PYCARD/ASC (via pyrin domain). Post-translationally, phosphorylated. In terms of tissue distribution, predominantly expressed in monocytes, macrophages and granulocytes.

The protein resides in the cytoplasm. Its function is as follows. Associates with PYCARD/ASC and modulates its ability to collaborate with MEFV/pyrin and NLRP3/cryopyrin in NF-kappa-B and pro-caspase-1 activation. Suppresses kinase activity of NF-kappa-B inhibitor kinase (IKK) complex, expression of NF-kappa-B inducible genes and inhibits NF-kappa-B activation by cytokines and LPS. In Homo sapiens (Human), this protein is Pyrin domain-containing protein 1.